A 553-amino-acid polypeptide reads, in one-letter code: MRSRSSTRIPVPLMLIIRIALTLSCIRLTSSLDGRPLAAAGIVVTGDKAVDIYTSSQTGSIIVKLLPNMPKDKEACAKAPLEAYNRTLTTLLTPLGDSIRRIQESVTTSGGRRQRRFIGAIIGSVALGVATPAQITAASALIQANQNAANILRLKESIAATNEAVHEVTDGLSQLAVAVGKMQQFVNDQFNNTAQQLDCIKITQQVGVELNLYLTELTTVFGPQITSPALTPLTIQALYNLAGGNMDYLLTKLGVGNNQLSSLIGSGLITGNPILYDSQTQILGIQITSPSVGNLNNMRATYLETLSVSTTKGFASALVPKVVTQVGSVIEELDTSYCMETDLDLYCTRIVTFPMSPGIYSCLSGNTSACMYSKTEGALTTPYMALKGSVIANCKMTTCRCADPPGIISQNYGEAVSLIDRHSCNVLSLDGITLRLSGEFDATYQKNISILDSQVIVTGNLDISTELGNVNNSISNALNKLEESNSKLDKLNVKLTSTSALITYIVLTVISLVFGVLSLVLACYLMYKQKAQQKTLLWLGNNTLDQMRATTKI.

The signal sequence occupies residues 1–31 (MRSRSSTRIPVPLMLIIRIALTLSCIRLTSS). Residues 32-500 (LDGRPLAAAG…LNVKLTSTSA (469 aa)) lie on the Extracellular side of the membrane. Disulfide bonds link C76–C199, C338–C347, C362–C370, C394–C399, and C401–C424. A glycan (N-linked (GlcNAc...) asparagine; by host) is linked at N85. A fusion peptide region spans residues 117-141 (FIGAIIGSVALGVATPAQITAASAL). Residues 142–170 (IQANQNAANILRLKESIAATNEAVHEVTD) are a coiled coil. Residue N191 is glycosylated (N-linked (GlcNAc...) asparagine; by host). N366 carries N-linked (GlcNAc...) asparagine; by host glycosylation. N-linked (GlcNAc...) asparagine; by host glycans are attached at residues N447 and N471. The stretch at 466–491 (ELGNVNNSISNALNKLEESNSKLDKL) forms a coiled coil. Residues 501–521 (LITYIVLTVISLVFGVLSLVL) traverse the membrane as a helical segment. Residues 522-553 (ACYLMYKQKAQQKTLLWLGNNTLDQMRATTKI) lie on the Cytoplasmic side of the membrane. A lipid anchor (S-palmitoyl cysteine; by host) is attached at C523.

It belongs to the paramyxoviruses fusion glycoprotein family. As to quaternary structure, homotrimer of disulfide-linked F1-F2. In terms of processing, the inactive precursor F0 is glycosylated and proteolytically cleaved into F1 and F2 to be functionally active. The cleavage is mediated by cellular proteases during the transport and maturation of the polypeptide.

The protein resides in the virion membrane. Its subcellular location is the host cell membrane. Class I viral fusion protein. Under the current model, the protein has at least 3 conformational states: pre-fusion native state, pre-hairpin intermediate state, and post-fusion hairpin state. During viral and plasma cell membrane fusion, the heptad repeat (HR) regions assume a trimer-of-hairpins structure, positioning the fusion peptide in close proximity to the C-terminal region of the ectodomain. The formation of this structure appears to drive apposition and subsequent fusion of viral and plasma cell membranes. Directs fusion of viral and cellular membranes leading to delivery of the nucleocapsid into the cytoplasm. This fusion is pH independent and occurs directly at the outer cell membrane. The trimer of F1-F2 (F protein) probably interacts with HN at the virion surface. Upon HN binding to its cellular receptor, the hydrophobic fusion peptide is unmasked and interacts with the cellular membrane, inducing the fusion between cell and virion membranes. Later in infection, F proteins expressed at the plasma membrane of infected cells could mediate fusion with adjacent cells to form syncytia, a cytopathic effect that could lead to tissue necrosis. The sequence is that of Fusion glycoprotein F0 (F) from Gallus gallus (Chicken).